The following is a 123-amino-acid chain: Ig heavy chain V region HPCM6 (123 aa).

The 114-residue stretch at 1 to 114 folds into the Ig-like domain; the sequence is EVKLVESGGG…YPHWYFDVWG (114 aa).

The chain is Ig heavy chain V region HPCM6 from Mus musculus (Mouse).